Reading from the N-terminus, the 63-residue chain is Conotoxin TeAr193 (63 aa).

The N-terminal stretch at 1–22 (MRCLPVFVILLLLIASAPSVDA) is a signal peptide. Residues 23 to 48 (QPKTKDDIPQASFLDNAKRYLQVLES) constitute a propeptide that is removed on maturation.

It belongs to the conotoxin T superfamily. Contains 2 disulfide bonds that can be either 'C1-C3, C2-C4' or 'C1-C4, C2-C3', since these disulfide connectivities have been observed for conotoxins with cysteine framework V (for examples, see AC P0DQQ7 and AC P81755). In terms of tissue distribution, expressed by the venom duct.

It is found in the secreted. The chain is Conotoxin TeAr193 from Conus textile (Cloth-of-gold cone).